Here is a 385-residue protein sequence, read N- to C-terminus: Probable tRNA sulfurtransferase (385 aa).

Residues 65–165 (AILQELFSFL…KEHFLVFTER (101 aa)) enclose the THUMP domain. ATP contacts are provided by residues 183 to 184 (LL), 208 to 209 (TF), Arg267, Gly285, and Gln294.

The protein belongs to the ThiI family.

It localises to the cytoplasm. The catalysed reaction is [ThiI sulfur-carrier protein]-S-sulfanyl-L-cysteine + a uridine in tRNA + 2 reduced [2Fe-2S]-[ferredoxin] + ATP + H(+) = [ThiI sulfur-carrier protein]-L-cysteine + a 4-thiouridine in tRNA + 2 oxidized [2Fe-2S]-[ferredoxin] + AMP + diphosphate. It catalyses the reaction [ThiS sulfur-carrier protein]-C-terminal Gly-Gly-AMP + S-sulfanyl-L-cysteinyl-[cysteine desulfurase] + AH2 = [ThiS sulfur-carrier protein]-C-terminal-Gly-aminoethanethioate + L-cysteinyl-[cysteine desulfurase] + A + AMP + 2 H(+). The protein operates within cofactor biosynthesis; thiamine diphosphate biosynthesis. Its function is as follows. Catalyzes the ATP-dependent transfer of a sulfur to tRNA to produce 4-thiouridine in position 8 of tRNAs, which functions as a near-UV photosensor. Also catalyzes the transfer of sulfur to the sulfur carrier protein ThiS, forming ThiS-thiocarboxylate. This is a step in the synthesis of thiazole, in the thiamine biosynthesis pathway. The sulfur is donated as persulfide by IscS. This is Probable tRNA sulfurtransferase from Mycoplasma genitalium (strain ATCC 33530 / DSM 19775 / NCTC 10195 / G37) (Mycoplasmoides genitalium).